The primary structure comprises 190 residues: Hypoxanthine/guanine phosphoribosyltransferase (190 aa).

This sequence belongs to the purine/pyrimidine phosphoribosyltransferase family. Archaeal HPRT subfamily. As to quaternary structure, homodimer.

The protein resides in the cytoplasm. The enzyme catalyses IMP + diphosphate = hypoxanthine + 5-phospho-alpha-D-ribose 1-diphosphate. The catalysed reaction is GMP + diphosphate = guanine + 5-phospho-alpha-D-ribose 1-diphosphate. Its pathway is purine metabolism; IMP biosynthesis via salvage pathway; IMP from hypoxanthine: step 1/1. Its function is as follows. Catalyzes a salvage reaction resulting in the formation of IMP that is energically less costly than de novo synthesis. This chain is Hypoxanthine/guanine phosphoribosyltransferase, found in Methanobacterium lacus (strain AL-21).